The sequence spans 358 residues: Aminodeoxyfutalosine deaminase (358 aa).

Positions 32 and 34 each coordinate Zn(2+). Substrate contacts are provided by arginine 87, aspartate 154, and glycine 188. Zn(2+) is bound at residue histidine 215. Glutamate 218 functions as the Proton donor in the catalytic mechanism. Aspartate 296 serves as a coordination point for Zn(2+).

The protein belongs to the metallo-dependent hydrolases superfamily. Adenosine and AMP deaminases family. Requires Zn(2+) as cofactor.

The enzyme catalyses 6-amino-6-deoxyfutalosine + H2O + H(+) = futalosine + NH4(+). It functions in the pathway quinol/quinone metabolism; menaquinone biosynthesis. Its function is as follows. Catalyzes the deamination of aminodeoxyfutalosine (AFL) into futalosine (FL), a step in the biosynthesis of menaquinone (MK, vitamin K2). To a lesser extent, can also deaminate adenosine, 5'-methylthioadenosine, 5'-deoxyadenosine, and 2'-deoxyadenosine. The sequence is that of Aminodeoxyfutalosine deaminase (add2) from Streptomyces avermitilis (strain ATCC 31267 / DSM 46492 / JCM 5070 / NBRC 14893 / NCIMB 12804 / NRRL 8165 / MA-4680).